A 399-amino-acid polypeptide reads, in one-letter code: Accessory Sec system protein translocase subunit SecY2 (399 aa).

10 consecutive transmembrane segments (helical) span residues 14–34 (ILFTCFILIVYIFGSNISIVG), 60–80 (LNVFSLGLGPWLTSLVIIMLL), 102–122 (IITIVFAIFQSYFVISTYIHN), 128–148 (SNIILLMLILVAGTMLLVWLA), 152–172 (ITYGICGPMPIVLTSLIKSLF), 184–204 (VLLLILVIVTLVIALLILLFI), 238–258 (ISIMISLSVYVLLNNMINLIA), 272–292 (FANPIGIMFYIVLQIVLSYLL), 335–355 (WTGAILVALILAVPLYSTLLV), and 362–382 (IYFSMQLIILVYISINIGETI).

This sequence belongs to the SecY/SEC61-alpha family. SecY2 subfamily. As to quaternary structure, component of the accessory SecA2/SecY2 protein translocase complex required to export cell wall proteins. May form heterotrimers with SecE and SecG subunits.

The protein localises to the cell membrane. In terms of biological role, part of the accessory SecA2/SecY2 system specifically required for export of possible cell wall proteins. The central subunit of a protein translocation channel. This Staphylococcus haemolyticus (strain JCSC1435) protein is Accessory Sec system protein translocase subunit SecY2.